The chain runs to 104 residues: uncharacterized protein (104 aa).

Positions 1-23 are cleaved as a signal peptide; the sequence is MDIHDYVELIALAFWVISVVSVG.

This is an uncharacterized protein from Lactobacillus helveticus (Lactobacillus suntoryeus).